Consider the following 104-residue polypeptide: Cell cycle protein GpsB (104 aa).

Residues 34–72 (LDVVIQDYEVFQKKIERLEQEIHQLRTEAKRAASERQTR) are a coiled coil. A compositionally biased stretch (basic and acidic residues) spans 60-71 (TEAKRAASERQT). A disordered region spans residues 60–82 (TEAKRAASERQTRHQTSPSVGST). Positions 73–82 (HQTSPSVGST) are enriched in polar residues.

This sequence belongs to the GpsB family. As to quaternary structure, forms polymers through the coiled coil domains. Interacts with PBP1, MreC and EzrA.

It localises to the cytoplasm. Its function is as follows. Divisome component that associates with the complex late in its assembly, after the Z-ring is formed, and is dependent on DivIC and PBP2B for its recruitment to the divisome. Together with EzrA, is a key component of the system that regulates PBP1 localization during cell cycle progression. Its main role could be the removal of PBP1 from the cell pole after pole maturation is completed. Also contributes to the recruitment of PBP1 to the division complex. Not essential for septum formation. The protein is Cell cycle protein GpsB of Halalkalibacterium halodurans (strain ATCC BAA-125 / DSM 18197 / FERM 7344 / JCM 9153 / C-125) (Bacillus halodurans).